The chain runs to 238 residues: Ribonuclease PH (238 aa).

Residues Arg-86 and 124-126 each bind phosphate; that span reads GTR.

The protein belongs to the RNase PH family. In terms of assembly, homohexameric ring arranged as a trimer of dimers.

The catalysed reaction is tRNA(n+1) + phosphate = tRNA(n) + a ribonucleoside 5'-diphosphate. Its function is as follows. Phosphorolytic 3'-5' exoribonuclease that plays an important role in tRNA 3'-end maturation. Removes nucleotide residues following the 3'-CCA terminus of tRNAs; can also add nucleotides to the ends of RNA molecules by using nucleoside diphosphates as substrates, but this may not be physiologically important. Probably plays a role in initiation of 16S rRNA degradation (leading to ribosome degradation) during starvation. The protein is Ribonuclease PH of Vibrio cholerae serotype O1 (strain ATCC 39315 / El Tor Inaba N16961).